The chain runs to 130 residues: Small ribosomal subunit protein uS11 (130 aa).

The protein belongs to the universal ribosomal protein uS11 family. As to quaternary structure, part of the 30S ribosomal subunit. Interacts with proteins S7 and S18. Binds to IF-3.

Its function is as follows. Located on the platform of the 30S subunit, it bridges several disparate RNA helices of the 16S rRNA. Forms part of the Shine-Dalgarno cleft in the 70S ribosome. The chain is Small ribosomal subunit protein uS11 from Xylella fastidiosa (strain 9a5c).